A 91-amino-acid chain; its full sequence is MAVKIRLKRMGSKRKPFYRIVVADSRSPRDGRFIEAVGYYNPLTNPVDLKLNEEDILNWLQKGAQPSDTVRNLLGSKGIMQKYHEARFAKK.

This sequence belongs to the bacterial ribosomal protein bS16 family.

In Lacticaseibacillus casei (strain BL23) (Lactobacillus casei), this protein is Small ribosomal subunit protein bS16.